Reading from the N-terminus, the 713-residue chain is Glutamine--fructose-6-phosphate aminotransferase [isomerizing] (713 aa).

The active-site For GATase activity is the Cys2. The Glutamine amidotransferase type-2 domain maps to Cys2–Gly316. SIS domains follow at residues Trp389–Ser528 and Cys561–Pro703.

In terms of assembly, homotetramer.

It carries out the reaction D-fructose 6-phosphate + L-glutamine = D-glucosamine 6-phosphate + L-glutamate. It participates in nucleotide-sugar biosynthesis; UDP-N-acetyl-alpha-D-glucosamine biosynthesis; alpha-D-glucosamine 6-phosphate from D-fructose 6-phosphate: step 1/1. Functionally, involved in amino sugar synthesis (formation of chitin, supplies the amino sugars of asparagine-linked oligosaccharides of glycoproteins). The sequence is that of Glutamine--fructose-6-phosphate aminotransferase [isomerizing] (GFA1) from Candida albicans (strain SC5314 / ATCC MYA-2876) (Yeast).